The sequence spans 480 residues: ATP synthase subunit beta (480 aa).

Residue 158-165 (GGAGVGKT) participates in ATP binding.

It belongs to the ATPase alpha/beta chains family. As to quaternary structure, F-type ATPases have 2 components, CF(1) - the catalytic core - and CF(0) - the membrane proton channel. CF(1) has five subunits: alpha(3), beta(3), gamma(1), delta(1), epsilon(1). CF(0) has three main subunits: a(1), b(2) and c(9-12). The alpha and beta chains form an alternating ring which encloses part of the gamma chain. CF(1) is attached to CF(0) by a central stalk formed by the gamma and epsilon chains, while a peripheral stalk is formed by the delta and b chains.

It is found in the cell inner membrane. It carries out the reaction ATP + H2O + 4 H(+)(in) = ADP + phosphate + 5 H(+)(out). Functionally, produces ATP from ADP in the presence of a proton gradient across the membrane. The catalytic sites are hosted primarily by the beta subunits. The protein is ATP synthase subunit beta of Koribacter versatilis (strain Ellin345).